The sequence spans 153 residues: MNIFEGKLIAEGLKVGIIVGRFNEFIGSKLLDGALDGLKRHGVNLEDIDVAWVPGAFEMPLIAKKMAKSPKYDAVICLGAVIKGSTSHYDYVCSEVSKGIANVSLETGKPVMFGVLTTNNIEQAIERAGTKAGNKGYECAVGAIEMANLIKEL.

5-amino-6-(D-ribitylamino)uracil is bound by residues phenylalanine 22, alanine 56–glutamate 58, and alanine 80–isoleucine 82. Serine 85–threonine 86 is a binding site for (2S)-2-hydroxy-3-oxobutyl phosphate. The Proton donor role is filled by histidine 88. Phenylalanine 113 is a binding site for 5-amino-6-(D-ribitylamino)uracil. (2S)-2-hydroxy-3-oxobutyl phosphate is bound at residue arginine 127.

It belongs to the DMRL synthase family.

It catalyses the reaction (2S)-2-hydroxy-3-oxobutyl phosphate + 5-amino-6-(D-ribitylamino)uracil = 6,7-dimethyl-8-(1-D-ribityl)lumazine + phosphate + 2 H2O + H(+). Its pathway is cofactor biosynthesis; riboflavin biosynthesis; riboflavin from 2-hydroxy-3-oxobutyl phosphate and 5-amino-6-(D-ribitylamino)uracil: step 1/2. Its function is as follows. Catalyzes the formation of 6,7-dimethyl-8-ribityllumazine by condensation of 5-amino-6-(D-ribitylamino)uracil with 3,4-dihydroxy-2-butanone 4-phosphate. This is the penultimate step in the biosynthesis of riboflavin. This Clostridium botulinum (strain Alaska E43 / Type E3) protein is 6,7-dimethyl-8-ribityllumazine synthase.